An 858-amino-acid chain; its full sequence is Bifunctional uridylyltransferase/uridylyl-removing enzyme (858 aa).

A uridylyltransferase region spans residues 1–318 (MNPTDLHPIK…FPRPESDARA (318 aa)). Residues 319–674 (IDEEFRSLHG…VRPTEEGSGL (356 aa)) are uridylyl-removing. The 123-residue stretch at 437 to 559 (VDQHTLAVIR…VKDERHLNAL (123 aa)) folds into the HD domain. ACT domains follow at residues 675–756 (QIMV…LADV) and 789–858 (RLSV…LAGE).

The protein belongs to the GlnD family. Mg(2+) serves as cofactor.

The enzyme catalyses [protein-PII]-L-tyrosine + UTP = [protein-PII]-uridylyl-L-tyrosine + diphosphate. The catalysed reaction is [protein-PII]-uridylyl-L-tyrosine + H2O = [protein-PII]-L-tyrosine + UMP + H(+). Its activity is regulated as follows. Uridylyltransferase (UTase) activity is inhibited by glutamine, while glutamine activates uridylyl-removing (UR) activity. Its function is as follows. Modifies, by uridylylation and deuridylylation, the PII regulatory proteins (GlnB and homologs), in response to the nitrogen status of the cell that GlnD senses through the glutamine level. Under low glutamine levels, catalyzes the conversion of the PII proteins and UTP to PII-UMP and PPi, while under higher glutamine levels, GlnD hydrolyzes PII-UMP to PII and UMP (deuridylylation). Thus, controls uridylylation state and activity of the PII proteins, and plays an important role in the regulation of nitrogen assimilation and metabolism. The polypeptide is Bifunctional uridylyltransferase/uridylyl-removing enzyme (Bordetella avium (strain 197N)).